Here is a 148-residue protein sequence, read N- to C-terminus: Large ribosomal subunit protein bL9 (148 aa).

The protein belongs to the bacterial ribosomal protein bL9 family.

Binds to the 23S rRNA. In Bacillus cereus (strain G9842), this protein is Large ribosomal subunit protein bL9.